Consider the following 579-residue polypeptide: MMAEQVKCASPVAASGAGPGPVVNAELEVKKLQELVRKLEKQNEQLRSRAASAAAAPHLLLLQPPPPSAPPPAGACSPLATHRAPASTTSPGPGALGPAFPGTYCLPSPAPSLLCSLQPADAPFVYSKPAAGFFGGGGSPEPGTAGTPPGEAATPPLPPPTLLDEVEPLDLESLAAWSEEDDYTWLYVGSSKTFTSPEKSPSPLQWCRHVLDNPTPEMEAARRSLRFRLEQGYTSRGSPLSPQSSIDSELSTSELEDDSISMGYKLQDLTDVQIMARLQEESLRQDYASTSASVSRNSSSVSLSSGKKGTCSDQEYDRYSLEDEEEFDHLPPPQPRLPRCSPFQRGIPHSQTFSSIRDCRRSPSTQYFPSNNFQQPQYYPPQAQTADQQPNRTNGDKLRRSMPNLARMPSTAAASSNLSSPVTVRSSQSFDSSLHGAGSGVSRVPSCIPSPGQIQHRVHSVGHFPVPIRQPLKATAYVSPTVQGSSSSGSSGSSGGSGSGMPLSNGTQLYSTTGIPTPNKAAASGILGRSALPRPSLAINGSNLPRSKIAQPVRSFLQPPKPLSSLSTLRDGNWRDGCY.

Disordered regions lie at residues 1–21 (MMAE…GPGP), 60–95 (LLLQ…GPGA), 135–162 (GGGG…PPTL), 233–258 (YTSR…LEDD), 289–313 (STSA…TCSD), and 347–454 (IPHS…PGQI). Low complexity predominate over residues 9–21 (ASPVAASGAGPGP). A coiled-coil region spans residues 21–56 (PVVNAELEVKKLQELVRKLEKQNEQLRSRAASAAAA). Residues 63 to 73 (QPPPPSAPPPA) show a composition bias toward pro residues. Positions 141–154 (EPGTAGTPPGEAAT) are enriched in low complexity. A compositionally biased stretch (polar residues) spans 233-243 (YTSRGSPLSPQ). Phosphoserine is present on serine 241. Composition is skewed to low complexity over residues 244-253 (SSIDSELSTS) and 289-305 (STSA…SLSS). Residues 362-373 (SPSTQYFPSNNF) show a composition bias toward polar residues. A compositionally biased stretch (low complexity) spans 374–390 (QQPQYYPPQAQTADQQP). Positions 412–432 (AAASSNLSSPVTVRSSQSFDS) are enriched in polar residues. Asymmetric dimethylarginine is present on arginine 469. Positions 479-516 (SPTVQGSSSSGSSGSSGGSGSGMPLSNGTQLYSTTGIP) are disordered. Residues 502–516 (PLSNGTQLYSTTGIP) are compositionally biased toward polar residues. Residue arginine 554 is modified to Asymmetric dimethylarginine.

It belongs to the SLAIN motif-containing family. Interacts with MAPRE1, MAPRE2, MAPRE3 and CKAP5. Interacts with ZDHHC17 (via ANK repeats). Expressed in embryonic stem cells. Expressed in adult bone marrow, brain, kidney, lung, testis and thymus. Expressed in colon. Isoform 1 is highly expressed in brain. Isoform 2 is more widely expressed in bone marrow, brain, colon, kidney, lung and thymus.

Its subcellular location is the cytoplasm. It localises to the cytoskeleton. Its function is as follows. Microtubule plus-end tracking protein that might be involved in the regulation of cytoplasmic microtubule dynamics, microtubule organization and microtubule elongation. The sequence is that of SLAIN motif-containing protein 1 (Slain1) from Mus musculus (Mouse).